A 197-amino-acid chain; its full sequence is ATP-dependent Clp protease proteolytic subunit (197 aa).

Ser98 (nucleophile) is an active-site residue. His123 is a catalytic residue.

This sequence belongs to the peptidase S14 family. In terms of assembly, fourteen ClpP subunits assemble into 2 heptameric rings which stack back to back to give a disk-like structure with a central cavity, resembling the structure of eukaryotic proteasomes.

The protein resides in the cytoplasm. The enzyme catalyses Hydrolysis of proteins to small peptides in the presence of ATP and magnesium. alpha-casein is the usual test substrate. In the absence of ATP, only oligopeptides shorter than five residues are hydrolyzed (such as succinyl-Leu-Tyr-|-NHMec, and Leu-Tyr-Leu-|-Tyr-Trp, in which cleavage of the -Tyr-|-Leu- and -Tyr-|-Trp bonds also occurs).. Functionally, cleaves peptides in various proteins in a process that requires ATP hydrolysis. Has a chymotrypsin-like activity. Plays a major role in the degradation of misfolded proteins. The chain is ATP-dependent Clp protease proteolytic subunit from Ligilactobacillus salivarius (strain UCC118) (Lactobacillus salivarius).